The chain runs to 67 residues: Sodium channel neurotoxin MeuNaTxalpha-10 (67 aa).

In terms of domain architecture, LCN-type CS-alpha/beta spans 2-66 (RDGYIAKPHN…VPIRIPGKCH (65 aa)). Cystine bridges form between cysteine 12–cysteine 65, cysteine 16–cysteine 38, cysteine 24–cysteine 48, and cysteine 28–cysteine 50. Position 67 (arginine 67) is a propeptide, removed by a carboxypeptidase.

Belongs to the long (4 C-C) scorpion toxin superfamily. Sodium channel inhibitor family. Alpha subfamily. In terms of tissue distribution, expressed by the venom gland.

The protein resides in the secreted. Its function is as follows. Alpha toxins bind voltage-independently at site-3 of sodium channels (Nav) and inhibit the inactivation of the activated channels, thereby blocking neuronal transmission. The sequence is that of Sodium channel neurotoxin MeuNaTxalpha-10 from Mesobuthus eupeus (Lesser Asian scorpion).